We begin with the raw amino-acid sequence, 342 residues long: Galactose mutarotase (342 aa).

Ser14 carries the post-translational modification Phosphoserine. Residues 81-82 (NR) and His107 contribute to the beta-D-galactose site. Position 124 is a phosphoserine (Ser124). The Proton donor role is filled by His176. Beta-D-galactose is bound by residues 176-178 (HSY), Asp243, Gln279, and Glu307. Glu307 acts as the Proton acceptor in catalysis.

The protein belongs to the aldose epimerase family. As to quaternary structure, monomer.

It is found in the cytoplasm. It catalyses the reaction alpha-D-galactose = beta-D-galactose. The catalysed reaction is alpha-D-glucose = beta-D-glucose. The protein operates within carbohydrate metabolism; hexose metabolism. Its pathway is carbohydrate metabolism; galactose metabolism. Mutarotase that catalyzes the interconversion of beta-D-galactose and alpha-D-galactose during galactose metabolism. Beta-D-galactose is metabolized in the liver into glucose 1-phosphate, the primary metabolic fuel, by the action of four enzymes that constitute the Leloir pathway: GALM, GALK1 (galactokinase), GALT (galactose-1-phosphate uridylyltransferase) and GALE (UDP-galactose-4'-epimerase). Involved in the maintenance of the equilibrium between the beta- and alpha-anomers of galactose, therefore ensuring a sufficient supply of the alpha-anomer for GALK1. Also active on D-glucose although shows a preference for galactose over glucose. This chain is Galactose mutarotase (Galm), found in Rattus norvegicus (Rat).